Consider the following 121-residue polypeptide: Ribonuclease P protein component (121 aa).

The protein belongs to the RnpA family. As to quaternary structure, consists of a catalytic RNA component (M1 or rnpB) and a protein subunit.

The enzyme catalyses Endonucleolytic cleavage of RNA, removing 5'-extranucleotides from tRNA precursor.. In terms of biological role, RNaseP catalyzes the removal of the 5'-leader sequence from pre-tRNA to produce the mature 5'-terminus. It can also cleave other RNA substrates such as 4.5S RNA. The protein component plays an auxiliary but essential role in vivo by binding to the 5'-leader sequence and broadening the substrate specificity of the ribozyme. This Alcanivorax borkumensis (strain ATCC 700651 / DSM 11573 / NCIMB 13689 / SK2) protein is Ribonuclease P protein component.